Here is a 534-residue protein sequence, read N- to C-terminus: Probable cytochrome c oxidase subunit 1 (534 aa).

8 consecutive transmembrane segments (helical) span residues 35 to 55, 76 to 96, 97 to 117, 120 to 140, 165 to 185, 202 to 222, 254 to 274, and 286 to 306; these read IMYIIFAIFAGVVGGLFSLLF, VLITVHAIIMVFFMIMPALFS, GFGNYFVPLLIGAPDMAFPRL, ISFWLLIPAFLLLISSTFIDG, VAIFSLHLTGLSSILGSINLI, PLFVWSILVTAFLIILAMPVL, LFWFFGHPEVYIVILPGFGIV, and IFGYQGMVGAMVIIGFVGFIV. Residue H81 participates in Fe(II)-heme a binding. The Cu cation site is built by H260 and Y264. Residues 260–264 constitute a cross-link (1'-histidyl-3'-tyrosine (His-Tyr)); sequence HPEVY. Cu cation is bound by residues H309 and H310. Helical transmembrane passes span 320-340 and 357-377; these read ALIYFTAGTMIIAVPTGIKIF and MLFAIGFIILFTIGGVTGIIL. H395 provides a ligand contact to heme a3. The next 3 helical transmembrane spans lie at 396–416, 433–453, and 475–495; these read FHYTMSLGALFTAFAGFYYWF, FWITFIGVNLTFFPQHFLGLA, and IGAGISIFAAFYFVFIVFYTL. Residue H397 coordinates Fe(II)-heme a.

It belongs to the heme-copper respiratory oxidase family.

Its subcellular location is the cell membrane. It catalyses the reaction 4 Fe(II)-[cytochrome c] + O2 + 8 H(+)(in) = 4 Fe(III)-[cytochrome c] + 2 H2O + 4 H(+)(out). It participates in energy metabolism; oxidative phosphorylation. In terms of biological role, cytochrome c oxidase is the component of the respiratory chain that catalyzes the reduction of oxygen to water. Subunits 1-3 form the functional core of the enzyme complex. CO I is the catalytic subunit of the enzyme. Electrons originating in cytochrome c are transferred via the copper A center of subunit 2 and heme A of subunit 1 to the bimetallic center formed by heme A3 and copper B. The sequence is that of Probable cytochrome c oxidase subunit 1 (ctaD) from Rickettsia prowazekii (strain Madrid E).